The chain runs to 305 residues: Ribosomal RNA small subunit methyltransferase H (305 aa).

S-adenosyl-L-methionine-binding positions include G30 to H32, D49, F74, D96, and Q103.

The protein belongs to the methyltransferase superfamily. RsmH family.

Its subcellular location is the cytoplasm. The catalysed reaction is cytidine(1402) in 16S rRNA + S-adenosyl-L-methionine = N(4)-methylcytidine(1402) in 16S rRNA + S-adenosyl-L-homocysteine + H(+). Functionally, specifically methylates the N4 position of cytidine in position 1402 (C1402) of 16S rRNA. The protein is Ribosomal RNA small subunit methyltransferase H of Francisella tularensis subsp. mediasiatica (strain FSC147).